The primary structure comprises 878 residues: Protein translocase subunit SecA (878 aa).

Residues Gln81, 99–103 (GEGKT), and Asp489 each bind ATP.

It belongs to the SecA family.

It localises to the plastid. The protein resides in the chloroplast stroma. The protein localises to the chloroplast thylakoid membrane. The catalysed reaction is ATP + H2O + cellular proteinSide 1 = ADP + phosphate + cellular proteinSide 2.. Functionally, has a central role in coupling the hydrolysis of ATP to the transfer of proteins across the thylakoid membrane. This Thalassiosira pseudonana (Marine diatom) protein is Protein translocase subunit SecA.